A 94-amino-acid chain; its full sequence is Ammonia regulation of amino acid uptake protein (94 aa).

Repeats lie at residues 48–57 (HHQIRRRTHQ) and 58–67 (HHQIRRRTHQ).

In terms of biological role, involved in ammonia regulation of the GAP1 permease. This is Ammonia regulation of amino acid uptake protein (AUA1) from Saccharomyces cerevisiae (strain ATCC 204508 / S288c) (Baker's yeast).